The primary structure comprises 556 residues: MLAMPRLITLSLCLFAPACLATCPNWDDARARQEIHQLQAQLAQWDDAYHRRGQSLVDDEIYDQSRAQLDGWRRCFVGTGAAPDPLQDAGGPLRHPVRQTGLVKLADEQAVATWIARRRDLWIQPKIDGVAVTLVYRHGALQQAISRGDGLTGHDWTANARRLAAIPARLAVPDEVILQGELYWRLDRHVQASHGSAGARGRVAGAMASNGLDRNTAARIGLFVWDWPNGPDSMNARLGQLAALGFPDTQAFSQPVETLEHARHWREHWYRQALPFATDGVVLRQEQRPPAERWQAEPHWAAAWKYPLRKALTEVRDVEFRIGRTGRITPLLQLAPVQLDDRRVRMLSLGSLDRWQALDVRPGDRVAVALAGHSIPQLDSVVWRHTERAPVAAPDPRRYHPDSCWRPAPGCEQQFLARLVWLGGRQGLALEGVGAGSWQALLEAGLLPDLLAWLELDAAALEQVPGIGKARANKLAASFARARQRPLAQWLKALGLPAKQLPPAADWDALAARDLAQWQAEAGVGPARAKQLQAFFRAAELPALRERLRAVGVPGT.

Catalysis depends on Lys-126, which acts as the N6-AMP-lysine intermediate.

This sequence belongs to the NAD-dependent DNA ligase family. LigB subfamily.

The catalysed reaction is NAD(+) + (deoxyribonucleotide)n-3'-hydroxyl + 5'-phospho-(deoxyribonucleotide)m = (deoxyribonucleotide)n+m + AMP + beta-nicotinamide D-nucleotide.. Catalyzes the formation of phosphodiester linkages between 5'-phosphoryl and 3'-hydroxyl groups in double-stranded DNA using NAD as a coenzyme and as the energy source for the reaction. This is DNA ligase B from Stutzerimonas stutzeri (strain A1501) (Pseudomonas stutzeri).